We begin with the raw amino-acid sequence, 611 residues long: Leukotriene A-4 hydrolase (611 aa).

K73 bears the N6-acetyllysine mark. Residues 135-137 (QCQ) and 267-272 (PYGGME) each bind a peptide. H296 provides a ligand contact to Zn(2+). Residue E297 is the Proton acceptor of the active site. H300 and E319 together coordinate Zn(2+). An N6-acetyllysine modification is found at K337. The active-site Proton donor is Y384. S416 bears the Phosphoserine mark. An a peptide-binding site is contributed by 564–566 (RMK). K573 is modified (N6-acetyllysine).

The protein belongs to the peptidase M1 family. The cofactor is Zn(2+). Post-translationally, phosphorylation at Ser-416 inhibits enzymatic activity.

It localises to the cytoplasm. The enzyme catalyses leukotriene A4 + H2O = leukotriene B4. It participates in lipid metabolism; leukotriene B4 biosynthesis. With respect to regulation, inhibited by bestatin. Subject to suicide inhibition by leukotriene A4. In terms of biological role, epoxide hydrolase that catalyzes the final step in the biosynthesis of the pro-inflammatory mediator leukotriene B4. Also has aminopeptidase activity. The chain is Leukotriene A-4 hydrolase (LTA4H) from Chinchilla lanigera (Long-tailed chinchilla).